Consider the following 455-residue polypeptide: MSTQSGGFTRTPGKDGLNPFDEDYVDLVRCMRNRGEHEEYTDLLDNVNTPRELLSAMESFEESSNEIPSQAATGVFAETGNRYDVPRSQDWDTMMKVVSAEEEMIEFLTEEFSAFIQKDCKNNSLEELIETVDEPKLVHSRTCIDEYYLTLILQNKAKETTDLKRPFPVSYQQMELCHKDALNSSERERSLDQFFRAVEPRMGILADQLCRRFENNTVNARRIYTTPLSLDQATDFVKWFTNRGELLIAEVRTLFGSMKQIKERKTTHKTLVEDTHPTTISESYRLDTDTAESQQSSQSESEREEENRRNRPSSSRHINTTRKRKSITTSKGVLTKKKSLKNQPRAISTYFTPADGTIMNAGASGGALTSIQGRIRQSLSTRSTPEHIRNIMFYNTKWPRSLCTSKWPTTEFEYVYRTESVCKESIQPKRHSNNWKRATIRMKVTFRTTVVTPTN.

Residues 262–276 (KERKTTHKTLVEDTH) are compositionally biased toward basic and acidic residues. The disordered stretch occupies residues 262-341 (KERKTTHKTL…GVLTKKKSLK (80 aa)).

This is Putative non-structural protein from Bombyx mori (Silk moth).